The primary structure comprises 78 residues: Protein SlyX homolog (78 aa).

This sequence belongs to the SlyX family.

The polypeptide is Protein SlyX homolog (Photobacterium profundum (strain SS9)).